A 184-amino-acid polypeptide reads, in one-letter code: Photosynthetic apparatus regulatory protein RegA (184 aa).

A Response regulatory domain is found at 14–128; sequence SLLLVDDDEP…EVTHALLAKG (115 aa).

In terms of processing, phosphorylated by RegB.

Its function is as follows. Member of the two-component regulatory system RegB/RegA. Involved in transactivating anaerobic expression of the photosynthetic apparatus. It is a transcriptional regulator that is responsible for activating expression of the puf, puh, and puc operons in response to a decrease in oxygen tension. The protein is Photosynthetic apparatus regulatory protein RegA (regA) of Cereibacter sphaeroides (strain ATCC 17023 / DSM 158 / JCM 6121 / CCUG 31486 / LMG 2827 / NBRC 12203 / NCIMB 8253 / ATH 2.4.1.) (Rhodobacter sphaeroides).